We begin with the raw amino-acid sequence, 409 residues long: Argininosuccinate synthase (409 aa).

ATP is bound by residues Ala-8–Ser-16 and Ala-34. L-citrulline is bound at residue Tyr-85. Residue Gly-115 participates in ATP binding. L-aspartate is bound by residues Thr-117, Asn-121, and Asp-122. Asn-121 contributes to the L-citrulline binding site. Positions 125, 178, 187, 268, and 280 each coordinate L-citrulline.

It belongs to the argininosuccinate synthase family. Type 1 subfamily. Homotetramer.

The protein localises to the cytoplasm. The enzyme catalyses L-citrulline + L-aspartate + ATP = 2-(N(omega)-L-arginino)succinate + AMP + diphosphate + H(+). It participates in amino-acid biosynthesis; L-arginine biosynthesis; L-arginine from L-ornithine and carbamoyl phosphate: step 2/3. The chain is Argininosuccinate synthase from Thermotoga sp. (strain RQ2).